Here is a 230-residue protein sequence, read N- to C-terminus: uncharacterized protein (230 aa).

7 helical membrane-spanning segments follow: residues 34-54 (FFAGSLLLATIGALLGLMNFQ), 56-76 (VVQYKWVFFIAEIAAFFGLMF), 87-107 (MLFAFTSLSGVTLVPLLGMVI), 111-131 (GLGAIWQALGMTTIVFGLMSV), 146-166 (MLFIALIVVVVCSLINLFLGS), 167-187 (PMFQVVIAGASAILFSLYIAY), and 205-225 (VSLYLDFLNVFISILQIIGIF).

It belongs to the BI1 family.

The protein resides in the cell membrane. This is an uncharacterized protein from Helicobacter pylori (strain ATCC 700392 / 26695) (Campylobacter pylori).